Consider the following 173-residue polypeptide: Transcription factor HES-2 (173 aa).

The 58-residue stretch at 13 to 70 folds into the bHLH domain; sequence LRKSLKPLLEKRRRARINQSLSQLKGLILPLLGRENSNCSKLEKADVLEMTVRFLQEL. The region spanning 86–119 is the Orange domain; it reads YREGYSACVARLARVLPACRVLEPAVSARLLEHL. The disordered stretch occupies residues 128 to 173; sequence LDGGRAGDSSGPSAPAPAPASAPEPASAPVPSPPSPPCGPGLWRPW. Pro residues predominate over residues 141–166; the sequence is APAPAPASAPEPASAPVPSPPSPPCG. Positions 170-173 match the WRPW motif motif; that stretch reads WRPW.

As to quaternary structure, transcription repression requires formation of a complex with a corepressor protein of the Groucho/TLE family. Expressed in placenta, pancreatic cancer, colon cancer with RER, cervical cancer, and in head and neck tumors.

It localises to the nucleus. Functionally, transcriptional repressor of genes that require a bHLH protein for their transcription. The polypeptide is Transcription factor HES-2 (HES2) (Homo sapiens (Human)).